Here is a 38-residue protein sequence, read N- to C-terminus: Large ribosomal subunit protein bL36 (38 aa).

The protein belongs to the bacterial ribosomal protein bL36 family.

This is Large ribosomal subunit protein bL36 from Flavobacterium johnsoniae (strain ATCC 17061 / DSM 2064 / JCM 8514 / BCRC 14874 / CCUG 350202 / NBRC 14942 / NCIMB 11054 / UW101) (Cytophaga johnsonae).